Here is a 395-residue protein sequence, read N- to C-terminus: Digeranylgeranylglycerophospholipid reductase (395 aa).

FAD contacts are provided by alanine 15, aspartate 34, cysteine 45, alanine 46, alanine 48, arginine 97, alanine 121, aspartate 276, and glycine 288. A 2,3-bis-O-(geranylgeranyl)-sn-glycerol 1-phospholipid is bound at residue arginine 329.

It belongs to the geranylgeranyl reductase family. DGGGPL reductase subfamily. The cofactor is FAD.

It carries out the reaction a 2,3-bis-O-phytanyl-sn-glycerol 1-phospholipid + 8 A = a 2,3-bis-O-(geranylgeranyl)-sn-glycerol 1-phospholipid + 8 AH2. It catalyses the reaction 2,3-bis-O-(phytanyl)-sn-glycerol 1-phosphate + 8 A = 2,3-bis-O-(geranylgeranyl)-sn-glycerol 1-phosphate + 8 AH2. The enzyme catalyses CDP-2,3-bis-O-(geranylgeranyl)-sn-glycerol + 8 AH2 = CDP-2,3-bis-O-(phytanyl)-sn-glycerol + 8 A. The catalysed reaction is archaetidylserine + 8 AH2 = 2,3-bis-O-phytanyl-sn-glycero-3-phospho-L-serine + 8 A. It functions in the pathway membrane lipid metabolism; glycerophospholipid metabolism. Its function is as follows. Is involved in the reduction of 2,3-digeranylgeranylglycerophospholipids (unsaturated archaeols) into 2,3-diphytanylglycerophospholipids (saturated archaeols) in the biosynthesis of archaeal membrane lipids. Catalyzes the formation of archaetidic acid (2,3-di-O-phytanyl-sn-glyceryl phosphate) from 2,3-di-O-geranylgeranylglyceryl phosphate (DGGGP) via the hydrogenation of each double bond of the isoprenoid chains. Is also probably able to reduce double bonds of geranyl groups in CDP-2,3-bis-O-(geranylgeranyl)-sn-glycerol and archaetidylserine, thus acting at various stages in the biosynthesis of archaeal membrane lipids. The chain is Digeranylgeranylglycerophospholipid reductase from Thermococcus kodakarensis (strain ATCC BAA-918 / JCM 12380 / KOD1) (Pyrococcus kodakaraensis (strain KOD1)).